Here is a 178-residue protein sequence, read N- to C-terminus: MKQLLDFLPLVVFFIFYKLYDIFVASGALIVASAIALAVSWLLYRKVEKMALFTFALVAIFGTLTIALHNPDFIKWKVTIIYGLFTLALLFSHWFMQQPLIQKMLGKEIRLPTTAWRRLNIAWALFFLACGLANIYVAFWLSQDTWMNFKVFGLSGLTLLFTLLSGIYIYRLMPQDEK.

A run of 5 helical transmembrane segments spans residues 22-42 (IFVA…VSWL), 50-70 (MALF…ALHN), 76-96 (WKVT…HWFM), 121-141 (IAWA…AFWL), and 149-169 (FKVF…GIYI).

Belongs to the YciB family.

The protein localises to the cell inner membrane. Plays a role in cell envelope biogenesis, maintenance of cell envelope integrity and membrane homeostasis. The polypeptide is Inner membrane-spanning protein YciB (Erwinia tasmaniensis (strain DSM 17950 / CFBP 7177 / CIP 109463 / NCPPB 4357 / Et1/99)).